A 28-amino-acid polypeptide reads, in one-letter code: Dermaseptin-H2 (28 aa).

This sequence belongs to the frog skin active peptide (FSAP) family. Dermaseptin subfamily. As to expression, expressed by the skin glands.

It is found in the secreted. Functionally, possesses a potent antimicrobial activity against Gram-positive and Gram-negative bacteria. Probably acts by disturbing membrane functions with its amphipathic structure. The polypeptide is Dermaseptin-H2 (Pithecopus azureus (Orange-legged monkey tree frog)).